The sequence spans 362 residues: Bifunctional nitrilase/nitrile hydratase NIT4 (362 aa).

Residues Val31–Leu307 enclose the CN hydrolase domain. Glu71 serves as the catalytic Proton acceptor. Catalysis depends on Lys162, which acts as the Proton donor. The active-site Nucleophile is Cys196.

This sequence belongs to the carbon-nitrogen hydrolase superfamily. Nitrilase family.

The catalysed reaction is a nitrile + 2 H2O = a carboxylate + NH4(+). It catalyses the reaction 3-cyano-L-alanine + 2 H2O = L-aspartate + NH4(+). In terms of biological role, highly specific for beta-cyano-L-alanine (Ala(CN)). Low activity with 3-phenylpropionitrile (PPN). Not associated with auxin production but may be involved in cyanide detoxification. The protein is Bifunctional nitrilase/nitrile hydratase NIT4 (NIT4) of Oryza sativa subsp. japonica (Rice).